Here is a 259-residue protein sequence, read N- to C-terminus: Probable UMP-CMP kinase 2 (259 aa).

ATP is bound at residue 63–68 (GSGKGT). An NMP region spans residues 83 to 112 (SAGDLLRREIAMHTENGAMILNLIKDGKIV). A ribonucleoside 5'-phosphate contacts are provided by residues arginine 89, 110–112 (KIV), and 137–140 (GFPR). Asparagine 144 lines the CMP pocket. The tract at residues 175–183 (NRNQGRIDD) is LID. Arginine 176 contributes to the ATP binding site. A ribonucleoside 5'-phosphate contacts are provided by arginine 180 and arginine 191. Glycine 219 contributes to the ATP binding site.

The protein belongs to the adenylate kinase family. UMP-CMP kinase subfamily. Monomer. Requires Mg(2+) as cofactor.

It is found in the cytoplasm. The protein resides in the nucleus. The catalysed reaction is CMP + ATP = CDP + ADP. It catalyses the reaction dCMP + ATP = dCDP + ADP. It carries out the reaction UMP + ATP = UDP + ADP. Catalyzes the phosphorylation of pyrimidine nucleoside monophosphates at the expense of ATP. Plays an important role in de novo pyrimidine nucleotide biosynthesis. Has preference for UMP and CMP as phosphate acceptors. The sequence is that of Probable UMP-CMP kinase 2 (UMK2) from Arabidopsis thaliana (Mouse-ear cress).